Consider the following 310-residue polypeptide: HPr kinase/phosphorylase (310 aa).

Residues H138 and K159 contribute to the active site. An ATP-binding site is contributed by 153–160; that stretch reads GASGIGKS. A Mg(2+)-binding site is contributed by S160. Residue D177 is the Proton acceptor; for phosphorylation activity. Proton donor; for dephosphorylation activity of the active site. The important for the catalytic mechanism of both phosphorylation and dephosphorylation stretch occupies residues 201-210; sequence IEIRGVGIID. Mg(2+) is bound at residue E202. Residue R243 is part of the active site. Residues 264–269 form an important for the catalytic mechanism of dephosphorylation region; sequence PVKTGR.

Belongs to the HPrK/P family. Homohexamer. Mg(2+) is required as a cofactor.

It catalyses the reaction [HPr protein]-L-serine + ATP = [HPr protein]-O-phospho-L-serine + ADP + H(+). The enzyme catalyses [HPr protein]-O-phospho-L-serine + phosphate + H(+) = [HPr protein]-L-serine + diphosphate. Functionally, catalyzes the ATP- as well as the pyrophosphate-dependent phosphorylation of a specific serine residue in HPr, a phosphocarrier protein of the phosphoenolpyruvate-dependent sugar phosphotransferase system (PTS). HprK/P also catalyzes the pyrophosphate-producing, inorganic phosphate-dependent dephosphorylation (phosphorolysis) of seryl-phosphorylated HPr (P-Ser-HPr). The two antagonistic activities of HprK/P are regulated by several intracellular metabolites, which change their concentration in response to the absence or presence of rapidly metabolisable carbon sources (glucose, fructose, etc.) in the growth medium. Therefore, by controlling the phosphorylation state of HPr, HPrK/P is a sensor enzyme that plays a major role in the regulation of carbon metabolism and sugar transport: it mediates carbon catabolite repression (CCR), and regulates PTS-catalyzed carbohydrate uptake and inducer exclusion. The protein is HPr kinase/phosphorylase of Lactococcus lactis subsp. cremoris (strain MG1363).